The following is a 457-amino-acid chain: MLKIFNTLTRQKEEFKPIHAGKVGMYVCGITVYDLCHIGHGRTFVAFDVVTRYLRYRGYEVNYVRNITDIEDKIIRRAAENGETFHQLTERMISEMHSDFDQLNILRPDQEPRATHYIDAIIELVGQLIDRDHAYVAANGDVMFAVDSDSDYGLLSRQDLEQLQAGARVEVADVKRNPMDFVLWKMSKPGEPSWPSPWGDGRPGWHIECSAMNGRQLGHHFDIHGGGSDLIFPHHENEIAQSTCAHDGPYVNVWMHAGMVMVDREKMSKSLGNFFTVRDVLRYYDAETVRYFLMSGHYRSQLNYSEENLKQARSALERLYIALRGTDATAVPAGGDHFVAQFIAAMDDDFNTPKAYSVLFDIAREVNRLKSEQPAAQGMAATLRQLAGVLGLLEQEPAAFLQQGAAEDNVMIEALIQQRNDARKARQWALADEARDKLTALGIVLEDGPQGTTWRRC.

Zn(2+) is bound at residue C28. The 'HIGH' region signature appears at 30–40 (ITVYDLCHIGH). Zn(2+)-binding residues include C209, H234, and E238. The short motif at 266–270 (KMSKS) is the 'KMSKS' region element. K269 contributes to the ATP binding site.

Belongs to the class-I aminoacyl-tRNA synthetase family. Monomer. Zn(2+) serves as cofactor.

The protein resides in the cytoplasm. The catalysed reaction is tRNA(Cys) + L-cysteine + ATP = L-cysteinyl-tRNA(Cys) + AMP + diphosphate. The polypeptide is Cysteine--tRNA ligase (Sodalis glossinidius (strain morsitans)).